The chain runs to 342 residues: Oxygen-dependent coproporphyrinogen-III oxidase (342 aa).

S98 is a binding site for substrate. A divalent metal cation-binding residues include H102 and H112. H112 (proton donor) is an active-site residue. Position 114-116 (114-116) interacts with substrate; that stretch reads NYR. A divalent metal cation is bound by residues H146 and H176. The tract at residues 266–301 is important for dimerization; sequence YVEFNLVWDRGTIFGLQTNGRTESILMSLPPLARWE.

This sequence belongs to the aerobic coproporphyrinogen-III oxidase family. Homodimer. A divalent metal cation serves as cofactor.

Its subcellular location is the cytoplasm. It catalyses the reaction coproporphyrinogen III + O2 + 2 H(+) = protoporphyrinogen IX + 2 CO2 + 2 H2O. It participates in porphyrin-containing compound metabolism; protoporphyrin-IX biosynthesis; protoporphyrinogen-IX from coproporphyrinogen-III (O2 route): step 1/1. Functionally, involved in the heme and chlorophyll biosynthesis. Catalyzes the aerobic oxidative decarboxylation of propionate groups of rings A and B of coproporphyrinogen-III to yield the vinyl groups in protoporphyrinogen-IX. This is Oxygen-dependent coproporphyrinogen-III oxidase from Prochlorococcus marinus subsp. pastoris (strain CCMP1986 / NIES-2087 / MED4).